The following is a 248-amino-acid chain: Ubiquinone biosynthesis O-methyltransferase (248 aa).

S-adenosyl-L-methionine-binding residues include Arg41, Gly72, Asp93, and Met136.

Belongs to the methyltransferase superfamily. UbiG/COQ3 family.

The enzyme catalyses a 3-demethylubiquinol + S-adenosyl-L-methionine = a ubiquinol + S-adenosyl-L-homocysteine + H(+). It carries out the reaction a 3-(all-trans-polyprenyl)benzene-1,2-diol + S-adenosyl-L-methionine = a 2-methoxy-6-(all-trans-polyprenyl)phenol + S-adenosyl-L-homocysteine + H(+). The protein operates within cofactor biosynthesis; ubiquinone biosynthesis. O-methyltransferase that catalyzes the 2 O-methylation steps in the ubiquinone biosynthetic pathway. The sequence is that of Ubiquinone biosynthesis O-methyltransferase from Brucella abortus (strain 2308).